Here is a 563-residue protein sequence, read N- to C-terminus: Probable terpene synthase 4 (563 aa).

Asp-316, Asp-320, and Glu-469 together coordinate Mg(2+). The short motif at 316-320 (DDIFD) is the DDXXD motif element.

The protein belongs to the terpene synthase family. Requires Mg(2+) as cofactor.

Functionally, probable sesquiterpene synthase. This Ricinus communis (Castor bean) protein is Probable terpene synthase 4 (TPS4).